The following is a 70-amino-acid chain: Small ribosomal subunit protein bS21C (70 aa).

The segment at Tyr38–Tyr70 is disordered. Residues Arg45 to Tyr70 show a composition bias toward basic residues.

The protein belongs to the bacterial ribosomal protein bS21 family.

This Burkholderia thailandensis (strain ATCC 700388 / DSM 13276 / CCUG 48851 / CIP 106301 / E264) protein is Small ribosomal subunit protein bS21C.